Consider the following 350-residue polypeptide: Protein-glutamate methylesterase/protein-glutamine glutaminase (350 aa).

One can recognise a Response regulatory domain in the interval 5 to 122; the sequence is KVLCVDDSAL…RDGLIEYSEV (118 aa). Asp-56 is modified (4-aspartylphosphate). Positions 152–346 constitute a CheB-type methylesterase domain; the sequence is PFASSEKLVI…ERILTRLGDR (195 aa). Active-site residues include Ser-165, His-191, and Asp-288.

This sequence belongs to the CheB family. Phosphorylated by CheA. Phosphorylation of the N-terminal regulatory domain activates the methylesterase activity.

It localises to the cytoplasm. It carries out the reaction [protein]-L-glutamate 5-O-methyl ester + H2O = L-glutamyl-[protein] + methanol + H(+). It catalyses the reaction L-glutaminyl-[protein] + H2O = L-glutamyl-[protein] + NH4(+). Its function is as follows. Involved in chemotaxis. Part of a chemotaxis signal transduction system that modulates chemotaxis in response to various stimuli. Catalyzes the demethylation of specific methylglutamate residues introduced into the chemoreceptors (methyl-accepting chemotaxis proteins or MCP) by CheR. Also mediates the irreversible deamidation of specific glutamine residues to glutamic acid. The polypeptide is Protein-glutamate methylesterase/protein-glutamine glutaminase (Bordetella pertussis (strain Tohama I / ATCC BAA-589 / NCTC 13251)).